We begin with the raw amino-acid sequence, 167 residues long: Small ribosomal subunit protein uS5 (167 aa).

One can recognise an S5 DRBM domain in the interval 12–75 (LQEKLITVNR…EKARRNMVTI (64 aa)).

The protein belongs to the universal ribosomal protein uS5 family. Part of the 30S ribosomal subunit. Contacts proteins S4 and S8.

With S4 and S12 plays an important role in translational accuracy. Its function is as follows. Located at the back of the 30S subunit body where it stabilizes the conformation of the head with respect to the body. In Buchnera aphidicola subsp. Schizaphis graminum (strain Sg), this protein is Small ribosomal subunit protein uS5.